The sequence spans 440 residues: Gap junction gamma-2 protein (440 aa).

At 1 to 21 (MTNMSWSFLTRLLEEIHNHST) the chain is on the cytoplasmic side. Residues 22–42 (FVGKVWLTVLVVFRIVLTAVG) form a helical membrane-spanning segment. At 43 to 78 (GESIYSDEQSKFTCNTRQPGCDNVCYDAFAPLSHVR) the chain is on the extracellular side. A helical transmembrane segment spans residues 79 to 99 (FWVFQIVVISTPSVMYLGYAV). The Cytoplasmic portion of the chain corresponds to 100–223 (HRLARASEQE…AQLVVRAAFE (124 aa)). A disordered region spans residues 108-199 (QERRRALRRR…TPGPAGQHDG (92 aa)). Positions 112–124 (RALRRRPGTRRLP) are enriched in basic residues. Residues 136-149 (PDTTDLGEAEPILA) are compositionally biased toward low complexity. Over residues 150-173 (LEEDEDEEPGAPEGPGEDTEEERA) the composition is skewed to acidic residues. Residues 224–244 (VAFLVGQYLLYGFEVPPFFAC) traverse the membrane as a helical segment. Topologically, residues 245-264 (SRQPCPHVVDCFVSRPTEKT) are extracellular. A helical transmembrane segment spans residues 265–285 (VFLLVMYVVSCLCLLLNLCEM). The Cytoplasmic portion of the chain corresponds to 286 to 440 (AHLGLGSAQD…SRDGKATVWI (155 aa)). Residues 369 to 440 (DRDSPPCAGL…SRDGKATVWI (72 aa)) form a disordered region. Position 372 is a phosphoserine (Ser372). Low complexity predominate over residues 388–401 (VGGLASGTGSATSG).

The protein belongs to the connexin family. Gamma-type subfamily. A connexon is composed of a hexamer of connexins. Interacts with TJP1. Mainly expressed by oligodendrocytes in the central nervous system (at protein level).

It localises to the cell membrane. The protein localises to the cell junction. Its subcellular location is the gap junction. Functionally, one gap junction consists of a cluster of closely packed pairs of transmembrane channels, the connexons, through which materials of low MW diffuse from one cell to a neighboring cell. May play a role in myelination in central and peripheral nervous systems. This chain is Gap junction gamma-2 protein (Gjc2), found in Mus musculus (Mouse).